We begin with the raw amino-acid sequence, 65 residues long: Alpha-conotoxine-like Am1.5 (65 aa).

Positions 1-21 (MGMRMMFTVFLLVVLATTVVS) are cleaved as a signal peptide. The propeptide occupies 22–46 (FMSGRAFRDRNAAAKVSDLIALKAR). Glu-49 bears the 4-carboxyglutamate mark. Residues 52 to 54 (SHP) are ser-Xaa-Pro motif, crucial for potent interaction with nAChR. A 4-hydroxyproline mark is found at Pro-54 and Pro-61. Glu-62 carries the post-translational modification 4-carboxyglutamate.

The protein belongs to the conotoxin A superfamily. Post-translationally, contains 2 disulfide bonds. As to expression, expressed by the venom duct.

The protein resides in the secreted. Functionally, alpha-conotoxins act on postsynaptic membranes, they bind to the nicotinic acetylcholine receptors (nAChR) and thus inhibit them. This is Alpha-conotoxine-like Am1.5 from Conus amadis (Amadis cone).